Consider the following 443-residue polypeptide: Trigger factor (443 aa).

The 86-residue stretch at 169–254 (GDIAFLDFSG…LNSIKEVQLP (86 aa)) folds into the PPIase FKBP-type domain.

Belongs to the FKBP-type PPIase family. Tig subfamily.

Its subcellular location is the cytoplasm. It catalyses the reaction [protein]-peptidylproline (omega=180) = [protein]-peptidylproline (omega=0). In terms of biological role, involved in protein export. Acts as a chaperone by maintaining the newly synthesized protein in an open conformation. Functions as a peptidyl-prolyl cis-trans isomerase. The sequence is that of Trigger factor from Mycoplasmoides gallisepticum (strain R(low / passage 15 / clone 2)) (Mycoplasma gallisepticum).